A 179-amino-acid polypeptide reads, in one-letter code: Negative modulator of initiation of replication (179 aa).

The tract at residues 86 to 87 is interaction with DNA; sequence AV.

Belongs to the SeqA family. In terms of assembly, homodimer. Polymerizes to form helical filaments.

The protein resides in the cytoplasm. Its function is as follows. Negative regulator of replication initiation, which contributes to regulation of DNA replication and ensures that replication initiation occurs exactly once per chromosome per cell cycle. Binds to pairs of hemimethylated GATC sequences in the oriC region, thus preventing assembly of replication proteins and re-initiation at newly replicated origins. Repression is relieved when the region becomes fully methylated. The protein is Negative modulator of initiation of replication of Shewanella woodyi (strain ATCC 51908 / MS32).